The following is a 716-amino-acid chain: Delta-1-pyrroline-5-carboxylate synthase 1 (716 aa).

Positions 1–296 (MASVDPSRSF…WESSKDVSTR (296 aa)) are glutamate 5-kinase. 3 residues coordinate substrate: Ser60, Asp157, and Asn176. ATP is bound by residues 196 to 197 (SD), 202 to 207 (YSGPPS), and 236 to 242 (RGGMTAK). The interval 297–716 (EMAVAARDCS…VYTHKSLPLQ (420 aa)) is gamma-glutamyl phosphate reductase.

It in the N-terminal section; belongs to the glutamate 5-kinase family. In the C-terminal section; belongs to the gamma-glutamyl phosphate reductase family. In terms of tissue distribution, expressed at high levels in leaves.

It catalyses the reaction L-glutamate + ATP = L-glutamyl 5-phosphate + ADP. The enzyme catalyses L-glutamate 5-semialdehyde + phosphate + NADP(+) = L-glutamyl 5-phosphate + NADPH + H(+). Its pathway is amino-acid biosynthesis; L-proline biosynthesis; L-glutamate 5-semialdehyde from L-glutamate: step 1/2. It functions in the pathway amino-acid biosynthesis; L-proline biosynthesis; L-glutamate 5-semialdehyde from L-glutamate: step 2/2. Its activity is regulated as follows. Feedback regulated by proline. Its function is as follows. P5CS plays a key role in proline biosynthesis, leading to osmoregulation in plants. Involved in abiotic stress tolerance. The sequence is that of Delta-1-pyrroline-5-carboxylate synthase 1 from Oryza sativa subsp. japonica (Rice).